Reading from the N-terminus, the 607-residue chain is UvrABC system protein C (607 aa).

In terms of domain architecture, GIY-YIG spans 16-94; sequence GRPGVYRMFD…IKEWRPPYNI (79 aa). The region spanning 203–238 is the UVR domain; that stretch reads NALTDELSGAMEQAASTLDFERAAELRDQISLLRRV.

It belongs to the UvrC family. As to quaternary structure, interacts with UvrB in an incision complex.

It localises to the cytoplasm. The UvrABC repair system catalyzes the recognition and processing of DNA lesions. UvrC both incises the 5' and 3' sides of the lesion. The N-terminal half is responsible for the 3' incision and the C-terminal half is responsible for the 5' incision. This is UvrABC system protein C from Pseudomonas fluorescens (strain SBW25).